We begin with the raw amino-acid sequence, 477 residues long: UDP-N-acetylmuramate--L-alanine ligase (477 aa).

122–128 is an ATP binding site; that stretch reads GTHGKTT.

This sequence belongs to the MurCDEF family.

It localises to the cytoplasm. It catalyses the reaction UDP-N-acetyl-alpha-D-muramate + L-alanine + ATP = UDP-N-acetyl-alpha-D-muramoyl-L-alanine + ADP + phosphate + H(+). It participates in cell wall biogenesis; peptidoglycan biosynthesis. Functionally, cell wall formation. This is UDP-N-acetylmuramate--L-alanine ligase from Xylella fastidiosa (strain M23).